The following is a 177-amino-acid chain: Large ribosomal subunit protein eL20 (177 aa).

This sequence belongs to the eukaryotic ribosomal protein eL20 family.

This chain is Large ribosomal subunit protein eL20 (RpL18A), found in Spodoptera frugiperda (Fall armyworm).